Consider the following 257-residue polypeptide: Deoxyribose-phosphate aldolase (257 aa).

The active-site Proton donor/acceptor is the Asp-102. Catalysis depends on Lys-166, which acts as the Schiff-base intermediate with acetaldehyde. Catalysis depends on Lys-198, which acts as the Proton donor/acceptor.

Belongs to the DeoC/FbaB aldolase family. DeoC type 2 subfamily.

It is found in the cytoplasm. The enzyme catalyses 2-deoxy-D-ribose 5-phosphate = D-glyceraldehyde 3-phosphate + acetaldehyde. It participates in carbohydrate degradation; 2-deoxy-D-ribose 1-phosphate degradation; D-glyceraldehyde 3-phosphate and acetaldehyde from 2-deoxy-alpha-D-ribose 1-phosphate: step 2/2. Its function is as follows. Catalyzes a reversible aldol reaction between acetaldehyde and D-glyceraldehyde 3-phosphate to generate 2-deoxy-D-ribose 5-phosphate. The polypeptide is Deoxyribose-phosphate aldolase (Shewanella amazonensis (strain ATCC BAA-1098 / SB2B)).